The following is a 114-amino-acid chain: Hydrogenase maturation factor HypA (114 aa).

His-2 provides a ligand contact to Ni(2+). Zn(2+) is bound by residues Cys-70, Cys-73, Cys-86, and Cys-89.

Belongs to the HypA/HybF family.

Its function is as follows. Involved in the maturation of [NiFe] hydrogenases. Required for nickel insertion into the metal center of the hydrogenase. This chain is Hydrogenase maturation factor HypA, found in Rippkaea orientalis (strain PCC 8801 / RF-1) (Cyanothece sp. (strain PCC 8801)).